Consider the following 483-residue polypeptide: Glutamate--tRNA ligase (483 aa).

The short motif at 11 to 21 (PSPTGHLHIGN) is the 'HIGH' region element. Residues Cys-108, Cys-110, His-135, and Asp-137 each contribute to the Zn(2+) site. The 'KMSKS' region signature appears at 252–256 (KLSKR). Residue Lys-255 coordinates ATP.

Belongs to the class-I aminoacyl-tRNA synthetase family. Glutamate--tRNA ligase type 1 subfamily. In terms of assembly, monomer. Zn(2+) serves as cofactor.

The protein resides in the cytoplasm. It carries out the reaction tRNA(Glu) + L-glutamate + ATP = L-glutamyl-tRNA(Glu) + AMP + diphosphate. Its function is as follows. Catalyzes the attachment of glutamate to tRNA(Glu) in a two-step reaction: glutamate is first activated by ATP to form Glu-AMP and then transferred to the acceptor end of tRNA(Glu). This Bacillus subtilis (strain 168) protein is Glutamate--tRNA ligase.